The chain runs to 135 residues: ATP synthase epsilon chain (135 aa).

This sequence belongs to the ATPase epsilon chain family. F-type ATPases have 2 components, CF(1) - the catalytic core - and CF(0) - the membrane proton channel. CF(1) has five subunits: alpha(3), beta(3), gamma(1), delta(1), epsilon(1). CF(0) has three main subunits: a, b and c.

The protein resides in the cell inner membrane. Its function is as follows. Produces ATP from ADP in the presence of a proton gradient across the membrane. The chain is ATP synthase epsilon chain from Rhizobium johnstonii (strain DSM 114642 / LMG 32736 / 3841) (Rhizobium leguminosarum bv. viciae).